A 273-amino-acid chain; its full sequence is Large ribosomal subunit protein uL2 (273 aa).

Residues 196–273 form a disordered region; the sequence is GNSDHGLESS…SSKYIIERRK (78 aa). Basic residues-rich tracts occupy residues 209-220 and 255-264; these read GRTRWMGRRPRN and LKTRAPKKQS.

Belongs to the universal ribosomal protein uL2 family. In terms of assembly, part of the 50S ribosomal subunit. Forms a bridge to the 30S subunit in the 70S ribosome.

Its function is as follows. One of the primary rRNA binding proteins. Required for association of the 30S and 50S subunits to form the 70S ribosome, for tRNA binding and peptide bond formation. It has been suggested to have peptidyltransferase activity; this is somewhat controversial. Makes several contacts with the 16S rRNA in the 70S ribosome. This chain is Large ribosomal subunit protein uL2, found in Phocaeicola vulgatus (strain ATCC 8482 / DSM 1447 / JCM 5826 / CCUG 4940 / NBRC 14291 / NCTC 11154) (Bacteroides vulgatus).